Here is a 193-residue protein sequence, read N- to C-terminus: Peptidyl-tRNA hydrolase (193 aa).

Tyrosine 14 contributes to the tRNA binding site. The active-site Proton acceptor is the histidine 19. Residues phenylalanine 64, asparagine 66, and asparagine 112 each coordinate tRNA.

It belongs to the PTH family. Monomer.

The protein localises to the cytoplasm. It carries out the reaction an N-acyl-L-alpha-aminoacyl-tRNA + H2O = an N-acyl-L-amino acid + a tRNA + H(+). Its function is as follows. Hydrolyzes ribosome-free peptidyl-tRNAs (with 1 or more amino acids incorporated), which drop off the ribosome during protein synthesis, or as a result of ribosome stalling. Catalyzes the release of premature peptidyl moieties from peptidyl-tRNA molecules trapped in stalled 50S ribosomal subunits, and thus maintains levels of free tRNAs and 50S ribosomes. The polypeptide is Peptidyl-tRNA hydrolase (Bartonella quintana (strain Toulouse) (Rochalimaea quintana)).